The chain runs to 294 residues: Probable enoyl-CoA hydratase 2 (294 aa).

(3R)-3-hydroxydecanoyl-CoA-binding positions include 84-85 (HG), Lys-113, 190-195 (DLNPLH), Gly-213, and Phe-243. Positions 165–269 (DRAPDAISKQ…INPTTILFQS (105 aa)) constitute a MaoC-like domain. Residues 292–294 (GSL) carry the Microbody targeting signal motif.

Belongs to the short-chain dehydrogenases/reductases (SDR) family.

It localises to the peroxisome. The enzyme catalyses a (3R)-3-hydroxyacyl-CoA = a (2E)-enoyl-CoA + H2O. The chain is Probable enoyl-CoA hydratase 2 (mfeB) from Dictyostelium discoideum (Social amoeba).